We begin with the raw amino-acid sequence, 501 residues long: Serine/threonine-protein kinase pelle (501 aa).

The segment at 1-25 (MSGVQTAEAEAQAQNQANGNRTRSR) is disordered. The span at 7-18 (AEAEAQAQNQAN) shows a compositional bias: low complexity. In terms of domain architecture, Death spans 55-121 (WQQLATAVKL…NAMRLIKDYV (67 aa)). A disordered region spans residues 144–176 (DSSAKVNNGPPFPSSSGVSNSNNNRTSTTATEE). Over residues 149–167 (VNNGPPFPSSSGVSNSNNN) the composition is skewed to low complexity. The Protein kinase domain maps to 213 to 499 (WSPDNRLGQG…AVLKRFEPFV (287 aa)). Residues 219–227 (LGQGGFGDV) and lysine 240 each bind ATP. Catalysis depends on aspartate 346, which acts as the Proton acceptor. ATP-binding positions include 348–351 (KPAN) and aspartate 364.

It belongs to the protein kinase superfamily. TKL Ser/Thr protein kinase family. Pelle subfamily. Interacts (via Death domain) with tub (via Death domain). Interacts with Pellino (Pli).

The protein localises to the cell membrane. It localises to the cytoplasm. It catalyses the reaction L-seryl-[protein] + ATP = O-phospho-L-seryl-[protein] + ADP + H(+). The enzyme catalyses L-threonyl-[protein] + ATP = O-phospho-L-threonyl-[protein] + ADP + H(+). In terms of biological role, plays an essential role in the Tl receptor signaling pathway that establishes embryonic dorsoventral polarity; the signal directs import of dl into ventral and ventrolateral nuclei, thereby establishing dorsoventral polarity. Tub recruits pll to the plasma membrane and protein-protein interaction activates pll. The chain is Serine/threonine-protein kinase pelle (pll) from Drosophila melanogaster (Fruit fly).